Reading from the N-terminus, the 307-residue chain is tRNA pseudouridine synthase B (307 aa).

The active-site Nucleophile is the D48.

This sequence belongs to the pseudouridine synthase TruB family. Type 1 subfamily.

It carries out the reaction uridine(55) in tRNA = pseudouridine(55) in tRNA. Functionally, responsible for synthesis of pseudouridine from uracil-55 in the psi GC loop of transfer RNAs. This chain is tRNA pseudouridine synthase B, found in Pasteurella multocida (strain Pm70).